Reading from the N-terminus, the 192-residue chain is Nucleoside triphosphate pyrophosphatase (192 aa).

Residue Asp-73 is the Proton acceptor of the active site.

It belongs to the Maf family. A divalent metal cation serves as cofactor.

The protein resides in the cytoplasm. The catalysed reaction is a ribonucleoside 5'-triphosphate + H2O = a ribonucleoside 5'-phosphate + diphosphate + H(+). It catalyses the reaction a 2'-deoxyribonucleoside 5'-triphosphate + H2O = a 2'-deoxyribonucleoside 5'-phosphate + diphosphate + H(+). Its function is as follows. Nucleoside triphosphate pyrophosphatase. May have a dual role in cell division arrest and in preventing the incorporation of modified nucleotides into cellular nucleic acids. This Ehrlichia ruminantium (strain Gardel) protein is Nucleoside triphosphate pyrophosphatase.